Reading from the N-terminus, the 82-residue chain is Small ribosomal subunit protein bS18 (82 aa).

A disordered region spans residues 1–20; it reads MSEASSAPVRRPFHRRRKTC.

The protein belongs to the bacterial ribosomal protein bS18 family. In terms of assembly, part of the 30S ribosomal subunit. Forms a tight heterodimer with protein bS6.

Its function is as follows. Binds as a heterodimer with protein bS6 to the central domain of the 16S rRNA, where it helps stabilize the platform of the 30S subunit. The chain is Small ribosomal subunit protein bS18 from Rhizobium etli (strain CIAT 652).